The sequence spans 627 residues: Chaperone protein HtpG (627 aa).

An a; substrate-binding region spans residues M1–R343. The b stretch occupies residues E344 to K553. The segment at V554–S627 is c.

This sequence belongs to the heat shock protein 90 family. As to quaternary structure, homodimer.

The protein localises to the cytoplasm. Its function is as follows. Molecular chaperone. Has ATPase activity. This chain is Chaperone protein HtpG, found in Natranaerobius thermophilus (strain ATCC BAA-1301 / DSM 18059 / JW/NM-WN-LF).